The primary structure comprises 763 residues: Phosphoglycerol transferase I (763 aa).

Transmembrane regions (helical) follow at residues 1–21, 26–46, 77–97, and 108–128; these read MSEL…AWKA, WWFA…ITLF, ILPG…LGWI, and FGYS…SPAF.

The protein belongs to the OpgB family.

The protein resides in the cell inner membrane. The enzyme catalyses a phosphatidylglycerol + a membrane-derived-oligosaccharide D-glucose = a 1,2-diacyl-sn-glycerol + a membrane-derived-oligosaccharide 6-(glycerophospho)-D-glucose.. Its pathway is glycan metabolism; osmoregulated periplasmic glucan (OPG) biosynthesis. Functionally, transfers a phosphoglycerol residue from phosphatidylglycerol to the membrane-bound nascent glucan backbones. This Escherichia coli (strain SE11) protein is Phosphoglycerol transferase I.